The sequence spans 410 residues: Venom metalloproteinase 2 (410 aa).

The first 22 residues, 1–22 (MDTFILTYSILFLALFIESIHS), serve as a signal peptide directing secretion. N-linked (GlcNAc...) asparagine glycans are attached at residues Asn-64, Asn-112, Asn-187, Asn-231, Asn-292, and Asn-307. The 197-residue stretch at 214–410 (FYPKLLVLVD…NNNVSKFIWS (197 aa)) folds into the Peptidase M12B domain. His-365 is a Zn(2+) binding site. Glu-366 is an active-site residue. Residues His-369 and His-375 each contribute to the Zn(2+) site. N-linked (GlcNAc...) asparagine glycosylation occurs at Asn-403.

The protein in the C-terminal section; belongs to the venom metalloproteinase (M12B) family. In terms of assembly, monomer. The cofactor is Zn(2+). In terms of tissue distribution, expressed by the venom gland.

It is found in the secreted. With respect to regulation, the gelatinase activity is inhibited by EDTA. Its function is as follows. The recombinant protein has gelatinase activity. In vivo, injection of this recombinant into fifth instar L.oleracea (host) larvae results in partial insect mortality associated with the molt to sixth instar, with surviving insects showing retarded development and growth. This is Venom metalloproteinase 2 from Eulophus pennicornis (Parasitoid wasp).